A 588-amino-acid chain; its full sequence is Adenine deaminase (588 aa).

This sequence belongs to the metallo-dependent hydrolases superfamily. Adenine deaminase family. In terms of assembly, homodimer. Mn(2+) serves as cofactor.

The catalysed reaction is adenine + H2O + H(+) = hypoxanthine + NH4(+). This Escherichia coli O45:K1 (strain S88 / ExPEC) protein is Adenine deaminase.